Here is a 485-residue protein sequence, read N- to C-terminus: NADH-quinone oxidoreductase subunit N (485 aa).

The next 14 helical transmembrane spans lie at 8–28 (LIAL…MLSI), 35–55 (FLNA…LWFV), 71–91 (GFAM…CTFA), 105–125 (FYLL…ANHL), 127–147 (SLFL…GYAF), 159–179 (YTIL…LVYA), 203–223 (LLAG…LVPF), 235–255 (PAPV…GVVM), 271–291 (VVLA…ALSQ), 297–317 (LLGY…IALQ), 326–346 (VGVY…VVSL), 373–393 (AAVM…LGFI), 408–430 (WWLV…RVAV), and 455–475 (IVVL…QPLI).

The protein belongs to the complex I subunit 2 family. In terms of assembly, NDH-1 is composed of 13 different subunits. Subunits NuoA, H, J, K, L, M, N constitute the membrane sector of the complex.

The protein localises to the cell inner membrane. It catalyses the reaction a quinone + NADH + 5 H(+)(in) = a quinol + NAD(+) + 4 H(+)(out). In terms of biological role, NDH-1 shuttles electrons from NADH, via FMN and iron-sulfur (Fe-S) centers, to quinones in the respiratory chain. The immediate electron acceptor for the enzyme in this species is believed to be ubiquinone. Couples the redox reaction to proton translocation (for every two electrons transferred, four hydrogen ions are translocated across the cytoplasmic membrane), and thus conserves the redox energy in a proton gradient. In Escherichia coli O7:K1 (strain IAI39 / ExPEC), this protein is NADH-quinone oxidoreductase subunit N.